Here is a 1522-residue protein sequence, read N- to C-terminus: Dicer-like protein 1 (1522 aa).

Residues 1-12 are compositionally biased toward acidic residues; the sequence is MTWAGDVEEQDD. The tract at residues 1–37 is disordered; it reads MTWAGDVEEQDDYFSCSDVSTSGDRRKRAPQTVTQEE. The Helicase ATP-binding domain maps to 76–258; that stretch reads LFLRAKMQNT…EHVREAAREL (183 aa). An ATP-binding site is contributed by 89-96; the sequence is LDTGTGKT. The DEAH box signature appears at 202–205; that stretch reads DEAH. Residues 408-576 enclose the Helicase C-terminal domain; it reads WLNLYYERTT…DVEQEKAELI (169 aa). One can recognise a Dicer dsRNA-binding fold domain in the interval 600-700; sequence SLSILSHFVA…LPTISKYLPA (101 aa). A PAZ domain is found at 859–980; sequence PFWKWSPQSR…ICPEPLHISN (122 aa). 2 RNase III domains span residues 995–1166 and 1222–1373; these read IIHR…MQHH and AHKI…VDSE. Mg(2+)-binding residues include E1262, D1359, and E1362. A DRBM domain is found at 1409–1478; sequence TRLSRLLSIN…SHAALEKLEG (70 aa). 4 residues coordinate Zn(2+): C1421, H1449, C1490, and C1492.

Belongs to the helicase family. Dicer subfamily. It depends on Mg(2+) as a cofactor. The cofactor is Mn(2+).

Functionally, dicer-like endonuclease involved in cleaving double-stranded RNA in the RNA interference (RNAi) pathway. Produces 21 to 25 bp dsRNAs (siRNAs) which target the selective destruction of homologous RNAs leading to sequence-specific suppression of gene expression, called post-transcriptional gene silencing (PTGS). Part of a broad host defense response against viral infection and transposons. This chain is Dicer-like protein 1 (DCL1), found in Phaeosphaeria nodorum (strain SN15 / ATCC MYA-4574 / FGSC 10173) (Glume blotch fungus).